A 422-amino-acid chain; its full sequence is UDP-N-acetylglucosamine 1-carboxyvinyltransferase (422 aa).

Position 22–23 (22–23) interacts with phosphoenolpyruvate; sequence KN. R94 contacts UDP-N-acetyl-alpha-D-glucosamine. C118 serves as the catalytic Proton donor. Position 118 is a 2-(S-cysteinyl)pyruvic acid O-phosphothioketal (C118). Residues 123–127, 163–166, D308, and I330 contribute to the UDP-N-acetyl-alpha-D-glucosamine site; these read RPVDL and KVSV.

It belongs to the EPSP synthase family. MurA subfamily.

It localises to the cytoplasm. It catalyses the reaction phosphoenolpyruvate + UDP-N-acetyl-alpha-D-glucosamine = UDP-N-acetyl-3-O-(1-carboxyvinyl)-alpha-D-glucosamine + phosphate. It functions in the pathway cell wall biogenesis; peptidoglycan biosynthesis. Functionally, cell wall formation. Adds enolpyruvyl to UDP-N-acetylglucosamine. The sequence is that of UDP-N-acetylglucosamine 1-carboxyvinyltransferase from Yersinia enterocolitica serotype O:8 / biotype 1B (strain NCTC 13174 / 8081).